Here is a 129-residue protein sequence, read N- to C-terminus: uncharacterized protein (129 aa).

Belongs to the asfivirus C129R family.

It is found in the virion. Its function is as follows. Plays a role in the inhibition of type I interferon signaling pathway. Mechanistically, specifically interacts with 2',3'-cGAMP and cleaves it via its phosphodiesterase activity. In turn, prevents 2',3'-cGAMP interaction with host ER-resident STING1 leading to inhibition of downstream signaling pathway and type I interferon production. This is an uncharacterized protein from African swine fever virus (isolate Pig/Kenya/KEN-50/1950) (ASFV).